Reading from the N-terminus, the 332-residue chain is Glycerol-3-phosphate dehydrogenase [NAD(P)+] (332 aa).

NADPH contacts are provided by S11, W12, R32, R33, and K106. The sn-glycerol 3-phosphate site is built by K106 and G136. A140 lines the NADPH pocket. Positions 191, 244, 254, 255, and 256 each coordinate sn-glycerol 3-phosphate. The active-site Proton acceptor is K191. Residue R255 participates in NADPH binding. Positions 280 and 282 each coordinate NADPH.

This sequence belongs to the NAD-dependent glycerol-3-phosphate dehydrogenase family.

Its subcellular location is the cytoplasm. The enzyme catalyses sn-glycerol 3-phosphate + NAD(+) = dihydroxyacetone phosphate + NADH + H(+). It carries out the reaction sn-glycerol 3-phosphate + NADP(+) = dihydroxyacetone phosphate + NADPH + H(+). It functions in the pathway membrane lipid metabolism; glycerophospholipid metabolism. Catalyzes the reduction of the glycolytic intermediate dihydroxyacetone phosphate (DHAP) to sn-glycerol 3-phosphate (G3P), the key precursor for phospholipid synthesis. In Corynebacterium aurimucosum (strain ATCC 700975 / DSM 44827 / CIP 107346 / CN-1) (Corynebacterium nigricans), this protein is Glycerol-3-phosphate dehydrogenase [NAD(P)+].